The primary structure comprises 203 residues: Protein GrpE 2 (203 aa).

Over residues 1 to 12 (MPTRPQEPDRAA) the composition is skewed to basic and acidic residues. Residues 1-64 (MPTRPQEPDR…APAEDEYTTA (64 aa)) form a disordered region. The segment covering 45 to 56 (GEPGPDAAGPAP) has biased composition (low complexity).

The protein belongs to the GrpE family. In terms of assembly, homodimer.

The protein localises to the cytoplasm. Its function is as follows. Participates actively in the response to hyperosmotic and heat shock by preventing the aggregation of stress-denatured proteins, in association with DnaK and GrpE. It is the nucleotide exchange factor for DnaK and may function as a thermosensor. Unfolded proteins bind initially to DnaJ; upon interaction with the DnaJ-bound protein, DnaK hydrolyzes its bound ATP, resulting in the formation of a stable complex. GrpE releases ADP from DnaK; ATP binding to DnaK triggers the release of the substrate protein, thus completing the reaction cycle. Several rounds of ATP-dependent interactions between DnaJ, DnaK and GrpE are required for fully efficient folding. This Streptomyces avermitilis (strain ATCC 31267 / DSM 46492 / JCM 5070 / NBRC 14893 / NCIMB 12804 / NRRL 8165 / MA-4680) protein is Protein GrpE 2.